The primary structure comprises 797 residues: LPS-assembly protein LptD (797 aa).

Positions 1 to 20 are cleaved as a signal peptide; that stretch reads MHTIRCLILSALSVAGAAQA. A disordered region spans residues 23 to 45; that stretch reads SQDAAPAGRQPVGSVASPGLEMP.

This sequence belongs to the LptD family. Component of the lipopolysaccharide transport and assembly complex. Interacts with LptE and LptA.

It localises to the cell outer membrane. Together with LptE, is involved in the assembly of lipopolysaccharide (LPS) at the surface of the outer membrane. The sequence is that of LPS-assembly protein LptD from Bordetella avium (strain 197N).